Reading from the N-terminus, the 152-residue chain is Cytochrome c-type biogenesis CcmH-like mitochondrial protein (152 aa).

Residues 1 to 83 (MATEEDVKQR…ILYTPKFDLQ (83 aa)) lie on the Mitochondrial intermembrane side of the membrane. The heme site is built by Cys26 and Cys29. Residues 84-104 (TAAIWLSPVIVGGVAAGVWAY) traverse the membrane as a helical segment. Topologically, residues 105 to 152 (QKHRQRTNVHIMALNLVRGVPLTPREKETMLDVLTPPPPANKWWWPGK) are mitochondrial matrix.

Belongs to the CcmH/CycL/Ccl2/NrfF family.

Its subcellular location is the mitochondrion inner membrane. Plays a role in mitochondrial cytochrome c maturation. Probable component of a heme lyase complex involved in the reduction of apocytochrome c. This Oryza sativa subsp. japonica (Rice) protein is Cytochrome c-type biogenesis CcmH-like mitochondrial protein.